Here is a 323-residue protein sequence, read N- to C-terminus: Pathogenicity locus probable regulatory protein WtsA (323 aa).

In terms of domain architecture, Sigma-54 factor interaction spans 41-251; sequence VAPLEIDLVL…ELKTAAKRFT (211 aa). ATP-binding positions include 52 to 59 and 123 to 132; these read GETGTGKD and EIDSMPLSLQ. The H-T-H motif DNA-binding region spans 293 to 312; that stretch reads IDEAAMELGMPLRTLYHRIK.

Functionally, positive activator of wtsB involved in plant pathogenicity. Probably interacts with sigma-54. The chain is Pathogenicity locus probable regulatory protein WtsA (wtsA) from Pantoea stewartii subsp. stewartii (Erwinia stewartii).